Here is a 300-residue protein sequence, read N- to C-terminus: MAAASAPVPGPGGASSTARGRIPAPATPYQEDIARYWNNEARPVNLRLGDVDGLYHHHYGIGAVDHAALGDPGDGGYEARLIAELHRLESAQAEFLLDHLGPVGPGDTLVDAGCGRGGSMVMAHQRFGCKVEGVTLSAAQAEFGNRRARELGIDDHVRSRVCNMLDTPFEKGTVAASWNNESSMYVDLHDVFAEHSRFLRVGGRYVTVTGCWNPRYGQPSKWVSQINAHFECNIHSRREYLRAMADNRLVPQTVVDLTPETLPYWELRATSSLVTGIEEAFIESYRDGSFQYVLIAADRV.

Residues 1–24 form a disordered region; that stretch reads MAAASAPVPGPGGASSTARGRIPA.

The protein belongs to the geranyl diphosphate 2-C-methyltransferase family. It depends on Mg(2+) as a cofactor.

The catalysed reaction is (2E)-geranyl diphosphate + S-adenosyl-L-methionine = (E)-2-methylgeranyl diphosphate + S-adenosyl-L-homocysteine + H(+). Catalyzes the SAM-dependent methylation of geranyl diphosphate (GPP) to yield (E)-2-methylgeranyl diphosphate (2-MeGPP). This chain is Geranyl diphosphate 2-C-methyltransferase (gdpmt), found in Streptomyces lasalocidi (Streptomyces lasaliensis).